The primary structure comprises 714 residues: Polyribonucleotide nucleotidyltransferase (714 aa).

Mg(2+) contacts are provided by D484 and D490. Positions 551 to 610 (PRIMVINIAPEKVREVIGPGGKVINKIIDETGVKIDTEDDGKITVAGENTESAQRAIDMI) constitute a KH domain. An S1 motif domain is found at 620–688 (GEKYLGRVTK…DQGKMTLSRK (69 aa)). Positions 685–714 (LSRKALLPKPERKEKKNFDKKSEDQNSEDK) are disordered. Over residues 693 to 714 (KPERKEKKNFDKKSEDQNSEDK) the composition is skewed to basic and acidic residues.

Belongs to the polyribonucleotide nucleotidyltransferase family. Mg(2+) serves as cofactor.

The protein resides in the cytoplasm. The enzyme catalyses RNA(n+1) + phosphate = RNA(n) + a ribonucleoside 5'-diphosphate. Its function is as follows. Involved in mRNA degradation. Catalyzes the phosphorolysis of single-stranded polyribonucleotides processively in the 3'- to 5'-direction. The sequence is that of Polyribonucleotide nucleotidyltransferase from Finegoldia magna (strain ATCC 29328 / DSM 20472 / WAL 2508) (Peptostreptococcus magnus).